A 178-amino-acid chain; its full sequence is Large ribosomal subunit protein uL5 (178 aa).

Belongs to the universal ribosomal protein uL5 family. In terms of assembly, part of the 50S ribosomal subunit; part of the 5S rRNA/L5/L18/L25 subcomplex. Contacts the 5S rRNA and the P site tRNA. Forms a bridge to the 30S subunit in the 70S ribosome.

In terms of biological role, this is one of the proteins that bind and probably mediate the attachment of the 5S RNA into the large ribosomal subunit, where it forms part of the central protuberance. In the 70S ribosome it contacts protein S13 of the 30S subunit (bridge B1b), connecting the 2 subunits; this bridge is implicated in subunit movement. Contacts the P site tRNA; the 5S rRNA and some of its associated proteins might help stabilize positioning of ribosome-bound tRNAs. In Acinetobacter baylyi (strain ATCC 33305 / BD413 / ADP1), this protein is Large ribosomal subunit protein uL5.